Reading from the N-terminus, the 281-residue chain is Acetylglutamate kinase (281 aa).

Residues 64 to 65 (GG), R86, and N179 contribute to the substrate site.

It belongs to the acetylglutamate kinase family. ArgB subfamily.

It is found in the cytoplasm. The enzyme catalyses N-acetyl-L-glutamate + ATP = N-acetyl-L-glutamyl 5-phosphate + ADP. It participates in amino-acid biosynthesis; L-arginine biosynthesis; N(2)-acetyl-L-ornithine from L-glutamate: step 2/4. Its function is as follows. Catalyzes the ATP-dependent phosphorylation of N-acetyl-L-glutamate. The polypeptide is Acetylglutamate kinase (Campylobacter curvus (strain 525.92)).